Here is a 55-residue protein sequence, read N- to C-terminus: Large ribosomal subunit protein bL33 (55 aa).

This sequence belongs to the bacterial ribosomal protein bL33 family.

This chain is Large ribosomal subunit protein bL33, found in Xanthobacter autotrophicus (strain ATCC BAA-1158 / Py2).